The primary structure comprises 798 residues: Ubiquitin carboxyl-terminal hydrolase 10 (798 aa).

The residue at position 2 (Ala2) is an N-acetylalanine. The interaction with p53/TP53 stretch occupies residues Ala2–Thr100. The G3BP1-binding stretch occupies residues Pro6 to Phe21. At Thr24 the chain carries Phosphothreonine. The residue at position 42 (Thr42) is a Phosphothreonine; by ATM. A Phosphothreonine modification is found at Thr100. Disordered stretches follow at residues Gly139 to Gly166, Ala194 to Ala257, and Thr307 to Ser337. Residues Thr205–Val219 are compositionally biased toward polar residues. Ser211 and Ser226 each carry phosphoserine. The segment covering Thr307–Lys316 has biased composition (basic and acidic residues). Ser321 carries the post-translational modification Phosphoserine. Polar residues predominate over residues Gly328–Ser337. Ser337 carries the post-translational modification Phosphoserine; by ATM. Phosphoserine is present on residues Ser365 and Ser370. A USP domain is found at Arg415–Val795. The active-site Nucleophile is Cys424. Ser547 bears the Phosphoserine mark. Positions Glu551–His562 are enriched in polar residues. The disordered stretch occupies residues Glu551–Gln594. 2 positions are modified to phosphoserine: Ser563 and Ser576. The segment covering Glu566–Glu581 has biased composition (acidic residues). Residue His749 is the Proton acceptor of the active site.

Belongs to the peptidase C19 family. USP10 subfamily. In terms of assembly, found in a deubiquitination complex with TANK, USP10 and ZC3H12A; this complex inhibits genotoxic stress- or interleukin-1-beta (IL1B)-mediated NF-kappa-B activation by promoting IKBKG or TRAF6 deubiquitination. Interacts with IKBKG; this interaction increases in response to DNA damage. Interacts with TANK; this interaction increases in response to DNA damage. Interacts with TRAF6; this interaction increases in response to DNA damage. Interacts with ZC3H12A; this interaction increases in response to DNA damage. Interacts with G3BP1 (via NTF2 domain) and G3BP2 (via NTF2 domain); inhibiting stress granule formation. Phosphorylated by ATM following DNA damage, leading to stabilization and translocation it to the nucleus. In terms of processing, ubiquitinated. Deubiquitinated by USP13. In terms of tissue distribution, widely expressed.

Its subcellular location is the cytoplasm. The protein resides in the nucleus. The protein localises to the early endosome. The catalysed reaction is Thiol-dependent hydrolysis of ester, thioester, amide, peptide and isopeptide bonds formed by the C-terminal Gly of ubiquitin (a 76-residue protein attached to proteins as an intracellular targeting signal).. With respect to regulation, specifically inhibited by spautin-1 (specific and potent autophagy inhibitor-1), a derivative of MBCQ that binds to USP10 and inhibits deubiquitinase activity. Regulated by PIK3C3/VPS34-containing complexes. Hydrolase that can remove conjugated ubiquitin from target proteins such as p53/TP53, RPS2/us5, RPS3/us3, RPS10/eS10, BECN1, SNX3 and CFTR. Acts as an essential regulator of p53/TP53 stability: in unstressed cells, specifically deubiquitinates p53/TP53 in the cytoplasm, leading to counteract MDM2 action and stabilize p53/TP53. Following DNA damage, translocates to the nucleus and deubiquitinates p53/TP53, leading to regulate the p53/TP53-dependent DNA damage response. Component of a regulatory loop that controls autophagy and p53/TP53 levels: mediates deubiquitination of BECN1, a key regulator of autophagy, leading to stabilize the PIK3C3/VPS34-containing complexes. In turn, PIK3C3/VPS34-containing complexes regulate USP10 stability, suggesting the existence of a regulatory system by which PIK3C3/VPS34-containing complexes regulate p53/TP53 protein levels via USP10 and USP13. Does not deubiquitinate MDM2. Plays a key role in 40S ribosome subunit recycling when a ribosome has stalled during translation: acts both by inhibiting formation of stress granules, which store stalled translation pre-initiation complexes, and mediating deubiquitination of 40S ribosome subunits. Acts as a negative regulator of stress granules formation by lowering G3BP1 and G3BP2 valence, thereby preventing G3BP1 and G3BP2 ability to undergo liquid-liquid phase separation (LLPS) and assembly of stress granules. Promotes 40S ribosome subunit recycling following ribosome dissociation in response to ribosome stalling by mediating deubiquitination of 40S ribosomal proteins RPS2/us5, RPS3/us3 and RPS10/eS10, thereby preventing their degradation by the proteasome. Part of a ribosome quality control that takes place when ribosomes have stalled during translation initiation (iRQC): USP10 acts by removing monoubiquitination of RPS2/us5 and RPS3/us3, promoting 40S ribosomal subunit recycling. Deubiquitinates CFTR in early endosomes, enhancing its endocytic recycling. Involved in a TANK-dependent negative feedback response to attenuate NF-kappa-B activation via deubiquitinating IKBKG or TRAF6 in response to interleukin-1-beta (IL1B) stimulation or upon DNA damage. Deubiquitinates TBX21 leading to its stabilization. Plays a negative role in the RLR signaling pathway upon RNA virus infection by blocking the RIGI-mediated MAVS activation. Mechanistically, removes the unanchored 'Lys-63'-linked polyubiquitin chains of MAVS to inhibit its aggregation, essential for its activation. This chain is Ubiquitin carboxyl-terminal hydrolase 10, found in Homo sapiens (Human).